The primary structure comprises 488 residues: Transmembrane protein 39A (488 aa).

Residues Asn31 and Asn39 are each glycosylated (N-linked (GlcNAc...) asparagine). Helical transmembrane passes span 72–92, 110–130, and 155–175; these read GLLF…IQYI, TSLN…VMLA, and LITA…WTLV. An N-linked (GlcNAc...) asparagine glycan is attached at Asn180. 5 helical membrane passes run 182–202, 287–307, 319–339, 420–440, and 446–466; these read SVLN…LCCF, EVLF…LCFV, CEHL…QLLP, LLNL…YSLL, and NHTL…FKLL.

The protein belongs to the TMEM39 family.

The protein localises to the endoplasmic reticulum membrane. Regulates autophagy by controlling the spatial distribution and levels of the intracellular phosphatidylinositol 4-phosphate (PtdIns(4)P) pools. Modulates (PtdIns(4)P) levels by regulating the ER-to-Golgi trafficking of the phosphatidylinositide phosphatase SACM1L. The chain is Transmembrane protein 39A (tmem39a) from Xenopus tropicalis (Western clawed frog).